A 166-amino-acid polypeptide reads, in one-letter code: Large ribosomal subunit protein uL10 (166 aa).

The protein belongs to the universal ribosomal protein uL10 family. As to quaternary structure, part of the ribosomal stalk of the 50S ribosomal subunit. The N-terminus interacts with L11 and the large rRNA to form the base of the stalk. The C-terminus forms an elongated spine to which L12 dimers bind in a sequential fashion forming a multimeric L10(L12)X complex.

Forms part of the ribosomal stalk, playing a central role in the interaction of the ribosome with GTP-bound translation factors. This is Large ribosomal subunit protein uL10 from Listeria monocytogenes serotype 4b (strain CLIP80459).